The chain runs to 142 residues: Peptide methionine sulfoxide reductase MsrB (142 aa).

The MsrB domain maps to 2 to 125 (LKKDKSELTD…NSAAIQFIPY (124 aa)). The active-site Nucleophile is C114.

The protein belongs to the MsrB Met sulfoxide reductase family.

It catalyses the reaction L-methionyl-[protein] + [thioredoxin]-disulfide + H2O = L-methionyl-(R)-S-oxide-[protein] + [thioredoxin]-dithiol. In Staphylococcus aureus (strain USA300), this protein is Peptide methionine sulfoxide reductase MsrB.